A 190-amino-acid chain; its full sequence is MRIAILGGTYNPVHIGHMFLAKELEHFLNVDKILFIPTHKPVHKRVENISVKDRIAMLKLAVQHEKNMFIDECDIVNGGITYTVDTIACIKNKYVHDDIYLVIGDDLFESFDSWKNPEKIVESVNLVVVHRIYSERLISRFKHTYIDNRIFPISSSEIRHRIEQGLPVDYLLPFDVLRYIKNNNLYVKGK.

Belongs to the NadD family.

The enzyme catalyses nicotinate beta-D-ribonucleotide + ATP + H(+) = deamido-NAD(+) + diphosphate. It participates in cofactor biosynthesis; NAD(+) biosynthesis; deamido-NAD(+) from nicotinate D-ribonucleotide: step 1/1. In terms of biological role, catalyzes the reversible adenylation of nicotinate mononucleotide (NaMN) to nicotinic acid adenine dinucleotide (NaAD). This chain is Probable nicotinate-nucleotide adenylyltransferase, found in Borrelia hermsii (strain HS1 / DAH).